A 300-amino-acid chain; its full sequence is Ribosomal RNA small subunit methyltransferase H (300 aa).

Residues Gly-46–His-48, Asp-65, Phe-92, Asp-107, and Gln-114 each bind S-adenosyl-L-methionine.

This sequence belongs to the methyltransferase superfamily. RsmH family.

The protein localises to the cytoplasm. It catalyses the reaction cytidine(1402) in 16S rRNA + S-adenosyl-L-methionine = N(4)-methylcytidine(1402) in 16S rRNA + S-adenosyl-L-homocysteine + H(+). In terms of biological role, specifically methylates the N4 position of cytidine in position 1402 (C1402) of 16S rRNA. The protein is Ribosomal RNA small subunit methyltransferase H of Prochlorococcus marinus (strain AS9601).